A 357-amino-acid chain; its full sequence is MAQYRVVLLPGDGIGPEITAVARQLLDVVAQRHGFQLMFEEQPIGGSAIDATGEPLPASTLTACRSADAVLLAAIGSPRFDSLPREKRPETGLLGLRSGLELFANLRPVKIVPALIGASSLKQEVIEGVDLMVVRELTGGIYFGQPKGRIEADGDERGFNTMTYSASEVDRIAKVAFEIAGERNNRLCSVDKANVLDVSQLWRDRVDAMAPRYGEVDVSHMYVDNAAMQLVRDPRQFDVLLTGNLFGDILSDEAAMLTGSIGMLPSASLGSDGPGLFEPVHGSAPDIAGQDKANPMAMVLSAAMMLRIGLKQSSAADDLERAVDAVLASGFRTGDLMSEGCTPLGCQAMGEQLLKAL.

Residues Arg97, Arg107, Arg135, and Asp224 each contribute to the substrate site. Residues Asp224, Asp248, and Asp252 each contribute to the Mg(2+) site. Residue 282–294 (GSAPDIAGQDKAN) participates in NAD(+) binding.

Belongs to the isocitrate and isopropylmalate dehydrogenases family. LeuB type 1 subfamily. In terms of assembly, homodimer. Mg(2+) is required as a cofactor. Requires Mn(2+) as cofactor.

Its subcellular location is the cytoplasm. The enzyme catalyses (2R,3S)-3-isopropylmalate + NAD(+) = 4-methyl-2-oxopentanoate + CO2 + NADH. It participates in amino-acid biosynthesis; L-leucine biosynthesis; L-leucine from 3-methyl-2-oxobutanoate: step 3/4. Catalyzes the oxidation of 3-carboxy-2-hydroxy-4-methylpentanoate (3-isopropylmalate) to 3-carboxy-4-methyl-2-oxopentanoate. The product decarboxylates to 4-methyl-2 oxopentanoate. The polypeptide is 3-isopropylmalate dehydrogenase (Synechococcus sp. (strain CC9902)).